The chain runs to 211 residues: Peptidyl-prolyl cis-trans isomerase-like 3 (211 aa).

Residues 1–204 form the PPIase cyclophilin-type domain; that stretch reads MSVTLHTTHG…ETLRINRVTI (204 aa).

The protein belongs to the cyclophilin-type PPIase family. PPIL3 subfamily.

The enzyme catalyses [protein]-peptidylproline (omega=180) = [protein]-peptidylproline (omega=0). Its function is as follows. PPIases accelerate the folding of proteins. It catalyzes the cis-trans isomerization of proline imidic peptide bonds in oligopeptides. In Emericella nidulans (strain FGSC A4 / ATCC 38163 / CBS 112.46 / NRRL 194 / M139) (Aspergillus nidulans), this protein is Peptidyl-prolyl cis-trans isomerase-like 3 (cyp10).